The following is an 82-amino-acid chain: Sec-independent protein translocase protein TatA (82 aa).

The chain crosses the membrane as a helical span at residues 1–21 (MGIFDWKHWIVILIVVVLVFG). Residues 43-82 (VNTEEDDKKDQPAAQPAQPLNQPHTIDAQAQKVEEPARKD) are disordered.

Belongs to the TatA/E family. The Tat system comprises two distinct complexes: a TatABC complex, containing multiple copies of TatA, TatB and TatC subunits, and a separate TatA complex, containing only TatA subunits. Substrates initially bind to the TatABC complex, which probably triggers association of the separate TatA complex to form the active translocon.

It localises to the cell inner membrane. Functionally, part of the twin-arginine translocation (Tat) system that transports large folded proteins containing a characteristic twin-arginine motif in their signal peptide across membranes. TatA could form the protein-conducting channel of the Tat system. The protein is Sec-independent protein translocase protein TatA of Pseudomonas aeruginosa (strain LESB58).